Consider the following 458-residue polypeptide: UPF0210 protein Mevan_0738 (458 aa).

The protein belongs to the UPF0210 family.

This is UPF0210 protein Mevan_0738 from Methanococcus vannielii (strain ATCC 35089 / DSM 1224 / JCM 13029 / OCM 148 / SB).